We begin with the raw amino-acid sequence, 310 residues long: Methionyl-tRNA formyltransferase (310 aa).

(6S)-5,6,7,8-tetrahydrofolate is bound at residue 111–114 (SLLP).

Belongs to the Fmt family.

It catalyses the reaction L-methionyl-tRNA(fMet) + (6R)-10-formyltetrahydrofolate = N-formyl-L-methionyl-tRNA(fMet) + (6S)-5,6,7,8-tetrahydrofolate + H(+). In terms of biological role, attaches a formyl group to the free amino group of methionyl-tRNA(fMet). The formyl group appears to play a dual role in the initiator identity of N-formylmethionyl-tRNA by promoting its recognition by IF2 and preventing the misappropriation of this tRNA by the elongation apparatus. This chain is Methionyl-tRNA formyltransferase, found in Rhodopseudomonas palustris (strain BisB5).